Here is a 235-residue protein sequence, read N- to C-terminus: Tumor necrosis factor (235 aa).

Over 1 to 35 (MSTESMIRDVELAEEALPKKAWGPQNSSRCLCLSL) the chain is Cytoplasmic. Position 2 is a phosphoserine; by CK1 (Ser2). N6-myristoyl lysine attachment occurs at residues Lys19 and Lys20. Residues 36-56 (FSFLLVAGATTLFCLLNFGVI) form a helical; Signal-anchor for type II membrane protein membrane-spanning segment. At 57–235 (GPQREEKFPN…GQVYFGVIAL (179 aa)) the chain is on the extracellular side. Ser83 is a glycosylation site (O-linked (GalNAc...) serine; in soluble form). N-linked (GlcNAc...) asparagine glycosylation is present at Asn86. Residues 91–235 (PVAHVVANHQ…GQVYFGVIAL (145 aa)) enclose the THD domain. The cysteines at positions 148 and 179 are disulfide-linked.

Belongs to the tumor necrosis factor family. As to quaternary structure, homotrimer. Interacts with SPPL2B. Post-translationally, the soluble form derives from the membrane form by proteolytic processing. The membrane-bound form is further proteolytically processed by SPPL2A or SPPL2B through regulated intramembrane proteolysis producing TNF intracellular domains (ICD1 and ICD2) released in the cytosol and TNF C-domain 1 and C-domain 2 secreted into the extracellular space. The membrane form, but not the soluble form, is phosphorylated on serine residues. Dephosphorylation of the membrane form occurs by binding to soluble TNFRSF1A/TNFR1. In terms of processing, O-glycosylated; glycans contain galactose, N-acetylgalactosamine and N-acetylneuraminic acid. Post-translationally, the soluble form is demyristoylated by SIRT6, promoting its secretion.

Its subcellular location is the cell membrane. It localises to the membrane. The protein resides in the secreted. Cytokine that binds to TNFRSF1A/TNFR1 and TNFRSF1B/TNFBR. It is mainly secreted by macrophages and can induce cell death of certain tumor cell lines. It is potent pyrogen causing fever by direct action or by stimulation of interleukin-1 secretion and is implicated in the induction of cachexia, Under certain conditions it can stimulate cell proliferation and induce cell differentiation. Induces insulin resistance in adipocytes via inhibition of insulin-induced IRS1 tyrosine phosphorylation and insulin-induced glucose uptake. Induces GKAP42 protein degradation in adipocytes which is partially responsible for TNF-induced insulin resistance. Plays a role in angiogenesis by inducing VEGF production synergistically with IL1B and IL6. Promotes osteoclastogenesis and therefore mediates bone resorption. In terms of biological role, the TNF intracellular domain (ICD) form induces IL12 production in dendritic cells. This is Tumor necrosis factor (TNF) from Peromyscus leucopus (White-footed mouse).